We begin with the raw amino-acid sequence, 579 residues long: Aspartate--tRNA(Asp/Asn) ligase (579 aa).

Glu171 is a binding site for L-aspartate. Positions Gln195–Lys198 are aspartate. Arg217 lines the L-aspartate pocket. Residues Arg217–Glu219 and Gln226 each bind ATP. An L-aspartate-binding site is contributed by His444. Glu475 is a binding site for ATP. Arg482 is an L-aspartate binding site. Gly527–Arg530 is an ATP binding site.

The protein belongs to the class-II aminoacyl-tRNA synthetase family. Type 1 subfamily. In terms of assembly, homodimer.

The protein resides in the cytoplasm. The catalysed reaction is tRNA(Asx) + L-aspartate + ATP = L-aspartyl-tRNA(Asx) + AMP + diphosphate. In terms of biological role, aspartyl-tRNA synthetase with relaxed tRNA specificity since it is able to aspartylate not only its cognate tRNA(Asp) but also tRNA(Asn). Reaction proceeds in two steps: L-aspartate is first activated by ATP to form Asp-AMP and then transferred to the acceptor end of tRNA(Asp/Asn). The sequence is that of Aspartate--tRNA(Asp/Asn) ligase from Thermotoga maritima (strain ATCC 43589 / DSM 3109 / JCM 10099 / NBRC 100826 / MSB8).